The chain runs to 402 residues: Odorant receptor 22c (402 aa).

Residues 1–42 (MTDSGQPAIADHFYRIPRISGLIVGLWPQRIRGGGGRPWHAH) lie on the Cytoplasmic side of the membrane. A helical membrane pass occupies residues 43 to 63 (LLFVFAFAMVVVGAVGEVSYG). The Extracellular segment spans residues 64-73 (CVHLDNLVVA). The chain crosses the membrane as a helical span at residues 74–94 (LEAFCPGTTKAVCVLKLWVFF). Residues 95–134 (RSNRRWAELVQRLRAILWESRRQEAQRMLVGLATTANRLS) lie on the Cytoplasmic side of the membrane. A helical membrane pass occupies residues 135-155 (LLLLSSGTATNAAFTLQPLIM). Over 156-173 (GLYRWIVQLPGQTELPFN) the chain is Extracellular. Residues 174 to 194 (IILPSFAVQPGVFPLTYVLLT) traverse the membrane as a helical segment. The Cytoplasmic segment spans residues 195-201 (ASGACTV). Residues 202–222 (FAFSFVDGFFICSCLYICGAF) traverse the membrane as a helical segment. At 223-276 (RLVQQDIRRIFADLHGDSVDVFTEEMNAEVRHRLAQVVERHNAIIDFCTDLTRQ) the chain is on the extracellular side. The chain crosses the membrane as a helical span at residues 277–297 (FTVIVLMHFLSAAFVLCSTIL). At 298–307 (DIMLNTSSLS) the chain is on the cytoplasmic side. Residues 308 to 328 (GLTYICYIIAALTQLFLYCFG) form a helical membrane-spanning segment. Topologically, residues 329-402 (GNHVSESSAA…SYITLLKTFL (74 aa)) are extracellular.

It belongs to the insect chemoreceptor superfamily. Heteromeric odorant receptor channel (TC 1.A.69) family. Or1a subfamily. Interacts with Orco. Complexes exist early in the endomembrane system in olfactory sensory neurons (OSNs), coupling these complexes to the conserved ciliary trafficking pathway. As to expression, not expressed in either the antenna or maxillary palp.

The protein resides in the cell membrane. Functionally, odorant receptor which mediates acceptance or avoidance behavior, depending on its substrates. The odorant receptor repertoire encodes a large collection of odor stimuli that vary widely in identity, intensity, and duration. May form a complex with Orco to form odorant-sensing units, providing sensitive and prolonged odorant signaling and calcium permeability. This chain is Odorant receptor 22c (Or22c), found in Drosophila melanogaster (Fruit fly).